The primary structure comprises 304 residues: Recombination-associated protein RdgC (304 aa).

It belongs to the RdgC family.

It is found in the cytoplasm. The protein resides in the nucleoid. Its function is as follows. May be involved in recombination. The sequence is that of Recombination-associated protein RdgC from Shewanella sp. (strain ANA-3).